We begin with the raw amino-acid sequence, 328 residues long: Olfactory receptor 4A16 (328 aa).

The Extracellular segment spans residues 1 to 23; it reads MRPSSNVTEFVLLGLTQDPDVKK. N-linked (GlcNAc...) asparagine glycosylation is present at N6. The chain crosses the membrane as a helical span at residues 24 to 47; that stretch reads TLFVMFLLIYIVTMVGNLLIWVTT. The Cytoplasmic segment spans residues 48-55; sequence IGSPSLGS. Residues 56–77 form a helical membrane-spanning segment; sequence LMYFFLAYLSLMDAIYSTAMSP. Over 78-98 the chain is Extracellular; it reads KLMIDLLCDKIAISLSACMGQ. A disulfide bond links C95 and C187. Residues 99–118 form a helical membrane-spanning segment; that stretch reads LFIEHLLGGAEVFLLVVMAY. Topologically, residues 119 to 137 are cytoplasmic; the sequence is DRYVAISKPLHYLNIMNRL. A helical membrane pass occupies residues 138–156; the sequence is VCILLLVVAMIGGFVHSVV. The Extracellular segment spans residues 157 to 193; the sequence is QIVFLYSLPICGPNVIDHSVCDMYPLLELLCLDTYFI. The helical transmembrane segment at 194–217 threads the bilayer; the sequence is GLTVVANGGIICMVIFTFLLISCG. Topologically, residues 218–233 are cytoplasmic; sequence VILNFLKTYSQEERHK. Residues 234 to 256 form a helical membrane-spanning segment; it reads ALPTCISHIIVVALVFVPCIFMY. At 257 to 267 the chain is on the extracellular side; the sequence is VRPVSNFPFDK. A helical membrane pass occupies residues 268 to 287; that stretch reads LMTVFYSIITLMLNPLIYSL. The Cytoplasmic segment spans residues 288-328; sequence RQSEMKNAMKNLWCEKLSIVRKRVSPTLNIFIPSSKATNRR.

This sequence belongs to the G-protein coupled receptor 1 family.

The protein localises to the cell membrane. Odorant receptor. This Homo sapiens (Human) protein is Olfactory receptor 4A16 (OR4A16).